A 337-amino-acid polypeptide reads, in one-letter code: WRKY transcription factor 23 (337 aa).

The disordered stretch occupies residues Ile-100–Ala-160. A compositionally biased stretch (low complexity) spans Pro-106–Ala-118. The span at His-142–Lys-155 shows a compositional bias: basic residues. The WRKY DNA-binding region spans Ser-168–Pro-233.

Belongs to the WRKY group II-c family.

The protein localises to the nucleus. Functionally, transcription factor. Interacts specifically with the W box (5'-(T)TGAC[CT]-3'), a frequently occurring elicitor-responsive cis-acting element. In Arabidopsis thaliana (Mouse-ear cress), this protein is WRKY transcription factor 23 (WRKY23).